Here is a 112-residue protein sequence, read N- to C-terminus: Large ribosomal subunit protein uL22 (112 aa).

This sequence belongs to the universal ribosomal protein uL22 family. As to quaternary structure, part of the 50S ribosomal subunit.

Functionally, this protein binds specifically to 23S rRNA; its binding is stimulated by other ribosomal proteins, e.g. L4, L17, and L20. It is important during the early stages of 50S assembly. It makes multiple contacts with different domains of the 23S rRNA in the assembled 50S subunit and ribosome. The globular domain of the protein is located near the polypeptide exit tunnel on the outside of the subunit, while an extended beta-hairpin is found that lines the wall of the exit tunnel in the center of the 70S ribosome. The chain is Large ribosomal subunit protein uL22 from Moorella thermoacetica (strain ATCC 39073 / JCM 9320).